A 551-amino-acid chain; its full sequence is Frizzled-2 (551 aa).

Positions 1–26 are cleaved as a signal peptide; sequence MQGVTRASILLIIYHLFTLSLGQLHG. The Extracellular segment spans residues 27 to 231; the sequence is EKGISVPEHG…FSQDEIRFAR (205 aa). One can recognise an FZ domain in the interval 33-152; the sequence is PEHGFCQPIS…HGAEQICVGQ (120 aa). 5 cysteine pairs are disulfide-bonded: C38-C99, C46-C92, C83-C120, C109-C149, and C113-C137. N-linked (GlcNAc...) asparagine glycosylation occurs at N52. Residue N153 is glycosylated (N-linked (GlcNAc...) asparagine). Residues 232–252 traverse the membrane as a helical segment; that stretch reads IWILIWSVLCCASTFITVTTY. Topologically, residues 253-265 are cytoplasmic; the sequence is LVDMQRFRYPERP. The helical transmembrane segment at 266–286 threads the bilayer; the sequence is IIFLSGCYTMVSVAYIAGFVL. At 287-313 the chain is on the extracellular side; it reads GDKVVCNEGFSEDGYKTVVQGTKKEGC. A helical transmembrane segment spans residues 314–334; the sequence is TILFMMLYFFSMASSIWWVIL. The Cytoplasmic segment spans residues 335 to 356; sequence SLTWFLAAGMKWGHEAIEANSQ. The helical transmembrane segment at 357 to 377 threads the bilayer; sequence YFHLAAWAVPAVKTITILAMG. Over 378–400 the chain is Extracellular; it reads QIDGDLLSGVCFVGLNNIDPLRG. The helical transmembrane segment at 401–421 threads the bilayer; the sequence is FVLAPLFVYLFIGTSFLLAGF. The Cytoplasmic segment spans residues 422–447; that stretch reads VSLFRIRTIMKHDGTKTEKLERLMVR. A helical membrane pass occupies residues 448-468; the sequence is IGVFSVLYTVPATIVIACYFY. At 469 to 505 the chain is on the extracellular side; the sequence is EQAFREHWERSWVSQNCKSLAIPCPLQYTPRMTPDFT. Residues 506 to 526 traverse the membrane as a helical segment; sequence VYMIKYLMTLIVGITSGFWIW. At 527–534 the chain is on the cytoplasmic side; that stretch reads SGKTLHSW. The Lys-Thr-X-X-X-Trp motif, mediates interaction with the PDZ domain of Dvl family members motif lies at 529 to 534; it reads KTLHSW. The short motif at 549–551 is the PDZ-binding element; sequence TTV.

It belongs to the G-protein coupled receptor Fz/Smo family. As to expression, widely expressed, especially in the eye anlage, otic vesicle and developing somites.

The protein resides in the membrane. It localises to the cell membrane. Functionally, receptor for Wnt proteins. Most of frizzled receptors are coupled to the beta-catenin canonical signaling pathway, which leads to the activation of disheveled proteins, inhibition of GSK-3 kinase, nuclear accumulation of beta-catenin and activation of Wnt target genes. A second signaling pathway involving PKC and calcium fluxes has been seen for some family members, but it is not yet clear if it represents a distinct pathway or if it can be integrated in the canonical pathway, as PKC seems to be required for Wnt-mediated inactivation of GSK-3 kinase. Both pathways seem to involve interactions with G-proteins. May be involved in transduction and intercellular transmission of polarity information during tissue morphogenesis and/or in differentiated tissues. This Xenopus laevis (African clawed frog) protein is Frizzled-2 (fzd2).